The following is a 231-amino-acid chain: Lipoprotein-releasing system ATP-binding protein LolD (231 aa).

In terms of domain architecture, ABC transporter spans Phe9–Asn230. An ATP-binding site is contributed by Gly45 to Ser52.

The protein belongs to the ABC transporter superfamily. Lipoprotein translocase (TC 3.A.1.125) family. The complex is composed of two ATP-binding proteins (LolD) and two transmembrane proteins (LolC and LolE).

The protein resides in the cell inner membrane. Part of the ABC transporter complex LolCDE involved in the translocation of mature outer membrane-directed lipoproteins, from the inner membrane to the periplasmic chaperone, LolA. Responsible for the formation of the LolA-lipoprotein complex in an ATP-dependent manner. The protein is Lipoprotein-releasing system ATP-binding protein LolD of Oleidesulfovibrio alaskensis (strain ATCC BAA-1058 / DSM 17464 / G20) (Desulfovibrio alaskensis).